The following is a 130-amino-acid chain: MAENQYYGTGRRKSSAARVFIKPGSGKIVINQRSLEQYFGRETARMVVRQPLELVDMVEKLDLYITVKGGGISGQAGAIRHGITRALMEYDESLRSELRKAGFVTRDARQVERKKVGLRKARRRPQFSKR.

The disordered stretch occupies residues 111–130; it reads VERKKVGLRKARRRPQFSKR. A compositionally biased stretch (basic residues) spans 116-130; it reads VGLRKARRRPQFSKR.

This sequence belongs to the universal ribosomal protein uS9 family.

This Enterobacter sp. (strain 638) protein is Small ribosomal subunit protein uS9.